Reading from the N-terminus, the 335-residue chain is UDP-N-acetylenolpyruvoylglucosamine reductase 1 (335 aa).

The FAD-binding PCMH-type domain maps to 36–202 (RIGGPAAVFA…LEVELLLKPG (167 aa)). Arg-181 is an active-site residue. The Proton donor role is filled by Ser-231. Glu-306 is a catalytic residue.

It belongs to the MurB family. Requires FAD as cofactor.

It localises to the cytoplasm. The catalysed reaction is UDP-N-acetyl-alpha-D-muramate + NADP(+) = UDP-N-acetyl-3-O-(1-carboxyvinyl)-alpha-D-glucosamine + NADPH + H(+). It participates in cell wall biogenesis; peptidoglycan biosynthesis. Its function is as follows. Cell wall formation. The sequence is that of UDP-N-acetylenolpyruvoylglucosamine reductase 1 (murB1) from Corynebacterium glutamicum (strain ATCC 13032 / DSM 20300 / JCM 1318 / BCRC 11384 / CCUG 27702 / LMG 3730 / NBRC 12168 / NCIMB 10025 / NRRL B-2784 / 534).